The following is a 357-amino-acid chain: Uroporphyrinogen decarboxylase (357 aa).

Substrate is bound by residues 34–38, aspartate 83, tyrosine 158, serine 213, and histidine 336; that span reads RQAGR.

Belongs to the uroporphyrinogen decarboxylase family. As to quaternary structure, homodimer.

The protein resides in the cytoplasm. The enzyme catalyses uroporphyrinogen III + 4 H(+) = coproporphyrinogen III + 4 CO2. Its pathway is porphyrin-containing compound metabolism; protoporphyrin-IX biosynthesis; coproporphyrinogen-III from 5-aminolevulinate: step 4/4. Functionally, catalyzes the decarboxylation of four acetate groups of uroporphyrinogen-III to yield coproporphyrinogen-III. This Mycolicibacterium paratuberculosis (strain ATCC BAA-968 / K-10) (Mycobacterium paratuberculosis) protein is Uroporphyrinogen decarboxylase.